We begin with the raw amino-acid sequence, 445 residues long: Ribosomal protein uS12 methylthiotransferase RimO (445 aa).

The region spanning 4-119 is the MTTase N-terminal domain; that stretch reads YKVGMVSLGC…INEAIMNFIN (116 aa). Residues cysteine 13, cysteine 48, cysteine 82, cysteine 157, cysteine 161, and cysteine 164 each coordinate [4Fe-4S] cluster. The 231-residue stretch at 143-373 folds into the Radical SAM core domain; the sequence is TTDKATAYLR…MLLQKEVSEE (231 aa). Residues 376–441 form the TRAM domain; it reads KNKVGREYDV…EYDLVGVVCN (66 aa).

It belongs to the methylthiotransferase family. RimO subfamily. [4Fe-4S] cluster serves as cofactor.

The protein resides in the cytoplasm. It carries out the reaction L-aspartate(89)-[ribosomal protein uS12]-hydrogen + (sulfur carrier)-SH + AH2 + 2 S-adenosyl-L-methionine = 3-methylsulfanyl-L-aspartate(89)-[ribosomal protein uS12]-hydrogen + (sulfur carrier)-H + 5'-deoxyadenosine + L-methionine + A + S-adenosyl-L-homocysteine + 2 H(+). In terms of biological role, catalyzes the methylthiolation of an aspartic acid residue of ribosomal protein uS12. This chain is Ribosomal protein uS12 methylthiotransferase RimO, found in Clostridium perfringens (strain 13 / Type A).